Here is a 237-residue protein sequence, read N- to C-terminus: Class B acid phosphatase (237 aa).

Residues 1–23 form the signal peptide; the sequence is MRKTPLALSAVFLLLSLNQSAFA. The Nucleophile role is filled by D69. 2 residues coordinate Mg(2+): D69 and D71. The active-site Proton donor is D71. Substrate contacts are provided by residues 137–138 and K177; that span reads TG. D192 is a Mg(2+) binding site.

This sequence belongs to the class B bacterial acid phosphatase family. As to quaternary structure, homotetramer. Mg(2+) is required as a cofactor.

The protein localises to the periplasm. It carries out the reaction a phosphate monoester + H2O = an alcohol + phosphate. Functionally, dephosphorylates several organic phosphate monoesters. Also has a phosphotransferase activity catalyzing the transfer of low-energy phosphate groups from organic phosphate monoesters to free hydroxyl groups of various organic compounds. In Rahnella sp. (strain Y9602), this protein is Class B acid phosphatase.